The sequence spans 513 residues: RNA-splicing ligase RtcB homolog (513 aa).

Mn(2+) is bound by residues aspartate 127, cysteine 130, histidine 235, histidine 267, and histidine 361. 234 to 238 (NHYAE) provides a ligand contact to GMP. GMP contacts are provided by residues 361-362 (HN), 410-413 (GGTM), serine 417, 436-439 (HGAG), and lysine 512. Histidine 436 functions as the GMP-histidine intermediate in the catalytic mechanism.

The protein belongs to the RtcB family. In terms of assembly, catalytic component of the tRNA-splicing ligase complex. The cofactor is Mn(2+).

It catalyses the reaction a 3'-end 3'-phospho-ribonucleotide-RNA + a 5'-end dephospho-ribonucleoside-RNA + GTP = a ribonucleotidyl-ribonucleotide-RNA + GMP + diphosphate. It carries out the reaction a 3'-end 2',3'-cyclophospho-ribonucleotide-RNA + a 5'-end dephospho-ribonucleoside-RNA + GTP + H2O = a ribonucleotidyl-ribonucleotide-RNA + GMP + diphosphate + H(+). Catalytic subunit of the tRNA-splicing ligase complex that acts by directly joining spliced tRNA halves to mature-sized tRNAs by incorporating the precursor-derived splice junction phosphate into the mature tRNA as a canonical 3',5'-phosphodiester. May act as an RNA ligase with broad substrate specificity, and may function toward other RNAs. This Micromonas commoda (strain RCC299 / NOUM17 / CCMP2709) (Picoplanktonic green alga) protein is RNA-splicing ligase RtcB homolog.